The primary structure comprises 309 residues: Porphobilinogen deaminase (309 aa).

An S-(dipyrrolylmethanemethyl)cysteine modification is found at C240.

The protein belongs to the HMBS family. As to quaternary structure, monomer. Dipyrromethane is required as a cofactor.

It catalyses the reaction 4 porphobilinogen + H2O = hydroxymethylbilane + 4 NH4(+). It functions in the pathway porphyrin-containing compound metabolism; protoporphyrin-IX biosynthesis; coproporphyrinogen-III from 5-aminolevulinate: step 2/4. Tetrapolymerization of the monopyrrole PBG into the hydroxymethylbilane pre-uroporphyrinogen in several discrete steps. This chain is Porphobilinogen deaminase, found in Brevibacillus brevis (strain 47 / JCM 6285 / NBRC 100599).